We begin with the raw amino-acid sequence, 87 residues long: MKLSIFFVLFFIAIAYCQPEFLDDEEDEVEETLPVAEEGREKSCITWRNSCMHYDKGCCFPWTCVCWSQTVSRNSSRKEKKCQCRLR.

Residues 1–17 (MKLSIFFVLFFIAIAYC) form the signal peptide. The propeptide occupies 18–40 (QPEFLDDEEDEVEETLPVAEEGR). 4 disulfide bridges follow: cysteine 44/cysteine 59, cysteine 51/cysteine 64, cysteine 58/cysteine 84, and cysteine 66/cysteine 82.

The protein belongs to the neurotoxin omega-lctx family. As to expression, expressed by the venom gland.

It is found in the secreted. Its function is as follows. Modulates Cav2.1/CACNA1A voltage-gated calcium channels (P/Q-type currents) in rat cerebellar Purkinje cells and hippocampal CA1-CA3 neurons. At saturating concentrations (&gt;10 nM) decelerates activation kinetics and slightly increases peak amplitude without affecting deactivation kinetics. In vivo, does not cause death when intravenously injected into mice. In rat models, through its activity on Cav2.1/CACNA1A, has an ameliorative effect on memory defects provoked by hyperstimulation of N-methyl-D-aspartate receptors (NMDARs) in the hippocampus. The sequence is that of Omega-lycotoxin-Am1g from Alopecosa marikovskyi (Wolf spider).